We begin with the raw amino-acid sequence, 87 residues long: Small ribosomal subunit protein uS17 (87 aa).

This sequence belongs to the universal ribosomal protein uS17 family. In terms of assembly, part of the 30S ribosomal subunit.

Functionally, one of the primary rRNA binding proteins, it binds specifically to the 5'-end of 16S ribosomal RNA. The polypeptide is Small ribosomal subunit protein uS17 (Aster yellows witches'-broom phytoplasma (strain AYWB)).